We begin with the raw amino-acid sequence, 234 residues long: MKNLVVLTGAGMSAESGISTFRDAGGLWDKYPVEQVATPEGYQRDPALVINFYNARRKQLLEVKPNRGHELLAELEKNFNVTVITQNVDNLHERAGSSHIVHLHGELTKVCSSRDPYNPHYIKELKPEEYEVKMGDKAGDGTQLRPFIVWFGEAVPEIETAVRYVEKADIFVIIGTSLNVYPAAGLLHYVPRGAEVYLIDPKPVDTHTSRSIHVLRKGASEGVEELKQLLIPAP.

The Deacetylase sirtuin-type domain occupies 1–234; it reads MKNLVVLTGA…ELKQLLIPAP (234 aa). 9 to 28 contributes to the NAD(+) binding site; sequence GAGMSAESGISTFRDAGGLW. 2 residues coordinate substrate: Tyr-53 and Arg-56. 86–89 contributes to the NAD(+) binding site; sequence QNVD. His-104 (proton acceptor) is an active-site residue. 175–177 provides a ligand contact to NAD(+); sequence GTS.

This sequence belongs to the sirtuin family. Class III subfamily.

The protein resides in the cytoplasm. The catalysed reaction is N(6)-acetyl-L-lysyl-[protein] + NAD(+) + H2O = 2''-O-acetyl-ADP-D-ribose + nicotinamide + L-lysyl-[protein]. It catalyses the reaction N(6)-succinyl-L-lysyl-[protein] + NAD(+) + H2O = 2''-O-succinyl-ADP-D-ribose + nicotinamide + L-lysyl-[protein]. NAD-dependent lysine deacetylase and desuccinylase that specifically removes acetyl and succinyl groups on target proteins. Modulates the activities of several proteins which are inactive in their acylated form. The protein is NAD-dependent protein deacylase of Bacteroides thetaiotaomicron (strain ATCC 29148 / DSM 2079 / JCM 5827 / CCUG 10774 / NCTC 10582 / VPI-5482 / E50).